A 104-amino-acid polypeptide reads, in one-letter code: 10 kDa heat shock protein, mitochondrial (104 aa).

Residue S81 is modified to Phosphoserine.

It belongs to the GroES chaperonin family. As to quaternary structure, homohexamer.

It localises to the mitochondrion matrix. Functionally, eukaryotic CPN10 homolog which is essential for mitochondrial protein biogenesis, together with CPN60. Binds to CPN60 in the presence of Mg-ATP and suppresses the ATPase activity of the latter. In Schizosaccharomyces pombe (strain 972 / ATCC 24843) (Fission yeast), this protein is 10 kDa heat shock protein, mitochondrial (hsp10).